The chain runs to 1097 residues: DNA-directed RNA polymerase subunit beta (1097 aa).

Residues 1073 to 1097 form a disordered region; it reads DVNPRRSTPSRPTYESLGVADYDED.

This sequence belongs to the RNA polymerase beta chain family. In terms of assembly, in cyanobacteria the RNAP catalytic core is composed of 2 alpha, 1 beta, 1 beta', 1 gamma and 1 omega subunit. When a sigma factor is associated with the core the holoenzyme is formed, which can initiate transcription.

It carries out the reaction RNA(n) + a ribonucleoside 5'-triphosphate = RNA(n+1) + diphosphate. Functionally, DNA-dependent RNA polymerase catalyzes the transcription of DNA into RNA using the four ribonucleoside triphosphates as substrates. The protein is DNA-directed RNA polymerase subunit beta of Synechococcus sp. (strain CC9311).